The chain runs to 393 residues: ATP phosphoribosyltransferase regulatory subunit (393 aa).

This sequence belongs to the class-II aminoacyl-tRNA synthetase family. HisZ subfamily. Heteromultimer composed of HisG and HisZ subunits.

It localises to the cytoplasm. The protein operates within amino-acid biosynthesis; L-histidine biosynthesis; L-histidine from 5-phospho-alpha-D-ribose 1-diphosphate: step 1/9. Functionally, required for the first step of histidine biosynthesis. May allow the feedback regulation of ATP phosphoribosyltransferase activity by histidine. The polypeptide is ATP phosphoribosyltransferase regulatory subunit (Shouchella clausii (strain KSM-K16) (Alkalihalobacillus clausii)).